The chain runs to 262 residues: Phosphate import ATP-binding protein PstB (262 aa).

The 242-residue stretch at 16-257 (IDVRNLNFYY…PHRKETEDYI (242 aa)) folds into the ABC transporter domain. Residue 48 to 55 (GPSGCGKS) participates in ATP binding.

This sequence belongs to the ABC transporter superfamily. Phosphate importer (TC 3.A.1.7) family. The complex is composed of two ATP-binding proteins (PstB), two transmembrane proteins (PstC and PstA) and a solute-binding protein (PstS).

The protein resides in the cell inner membrane. It carries out the reaction phosphate(out) + ATP + H2O = ADP + 2 phosphate(in) + H(+). Part of the ABC transporter complex PstSACB involved in phosphate import. Responsible for energy coupling to the transport system. In Cupriavidus metallidurans (strain ATCC 43123 / DSM 2839 / NBRC 102507 / CH34) (Ralstonia metallidurans), this protein is Phosphate import ATP-binding protein PstB.